A 343-amino-acid chain; its full sequence is Calcium/calmodulin-dependent protein kinase type 1B (343 aa).

Residues 15 to 270 (YEIREKLGSG…CQQALQHLWI (256 aa)) enclose the Protein kinase domain. ATP contacts are provided by residues 21–29 (LGSGAFSEV) and K44. The Proton acceptor role is filled by D136. Positions 290-311 (KNFARTHWKRAFNATSFLRHIR) are calmodulin-binding. The tract at residues 314-343 (GQSPEGEEASRQCMTRHSHPGLGTSQSPKW) is disordered. S338 is subject to Phosphoserine.

It belongs to the protein kinase superfamily. CAMK Ser/Thr protein kinase family. CaMK subfamily. As to expression, expressed at highest levels in adult brain, and expressed in embryo. In the adult brain detected at high levels in the anterior olfactory nuclei, piriform cortex, septal nuclei, bed nuclei of the stria terminalis, hippocampal pyramidal cells, dentate granule cells, amygdala, hypothalamic nuclei, parabrachial nucleus, and nucleus of the solitary tract. Expressed at lower levels in adult ovary and heart and at very low levels in testis, lung and muscle.

It is found in the cytoplasm. The protein resides in the nucleus. The catalysed reaction is L-seryl-[protein] + ATP = O-phospho-L-seryl-[protein] + ADP + H(+). It catalyses the reaction L-threonyl-[protein] + ATP = O-phospho-L-threonyl-[protein] + ADP + H(+). Its activity is regulated as follows. Activated by Ca(2+)/calmodulin. Functionally, calcium/calmodulin-dependent protein kinase belonging to a proposed calcium-triggered signaling cascade. In vitro phosphorylates CREB1 and SYN1/synapsin I. Phosphorylates and activates CAMK1. This Mus musculus (Mouse) protein is Calcium/calmodulin-dependent protein kinase type 1B (Pnck).